A 96-amino-acid polypeptide reads, in one-letter code: Evasin P1100 (96 aa).

An N-terminal signal peptide occupies residues 1 to 28 (MAFNVITFLQFSVFVVILFNINLHSASA). 3 cysteine pairs are disulfide-bonded: Cys48–Cys67, Cys52–Cys69, and Cys63–Cys80. The N-linked (GlcNAc...) asparagine glycan is linked to Asn51. Asn74 carries an N-linked (GlcNAc...) asparagine glycan.

Its subcellular location is the secreted. In terms of biological role, salivary chemokine-binding protein which binds to host chemokines CXCL1, CXCL2, CXCL3, CXCL5, CXCL6, CXCL10, CXCL11 and CXCL13. This is Evasin P1100 from Ixodes ricinus (Common tick).